The chain runs to 362 residues: 3-dehydroquinate synthase (362 aa).

NAD(+) contacts are provided by residues 71–76 (DGEQYK), 105–109 (GVVGD), 129–130 (TT), lysine 142, lysine 151, and 169–172 (CLKT). Zn(2+) contacts are provided by glutamate 184, histidine 247, and histidine 264.

The protein belongs to the sugar phosphate cyclases superfamily. Dehydroquinate synthase family. Requires Co(2+) as cofactor. Zn(2+) is required as a cofactor. The cofactor is NAD(+).

It localises to the cytoplasm. The enzyme catalyses 7-phospho-2-dehydro-3-deoxy-D-arabino-heptonate = 3-dehydroquinate + phosphate. It functions in the pathway metabolic intermediate biosynthesis; chorismate biosynthesis; chorismate from D-erythrose 4-phosphate and phosphoenolpyruvate: step 2/7. Functionally, catalyzes the conversion of 3-deoxy-D-arabino-heptulosonate 7-phosphate (DAHP) to dehydroquinate (DHQ). The chain is 3-dehydroquinate synthase from Shigella dysenteriae serotype 1 (strain Sd197).